The sequence spans 558 residues: Acylase ACY 1 proenzyme (558 aa).

The active-site Nucleophile is the T368.

It belongs to the gamma-glutamyltransferase family. Dimer of two non-identical chains processed from the same precursor.

The enzyme catalyses (7R)-7-(4-carboxybutanamido)cephalosporanate + H2O = (7R)-7-aminocephalosporanate + glutarate. The catalysed reaction is an N-terminal (5-L-glutamyl)-[peptide] + an alpha-amino acid = 5-L-glutamyl amino acid + an N-terminal L-alpha-aminoacyl-[peptide]. It catalyses the reaction glutathione + H2O = L-cysteinylglycine + L-glutamate. It carries out the reaction an S-substituted glutathione + H2O = an S-substituted L-cysteinylglycine + L-glutamate. Besides the cephalosporin acylase I activity which converts GL-7ACA into 7-ACA; this enzyme displays some gamma glutamyltranspeptidase activity. The sequence is that of Acylase ACY 1 proenzyme (acyI) from Pseudomonas sp. (strain V22).